Reading from the N-terminus, the 602-residue chain is UvrABC system protein C (602 aa).

A GIY-YIG domain is found at 17–94 (TTSGCYKMYS…IKEHKPDYNI (78 aa)). Residues 199–234 (SKLLDEIEIKMKEVIKREDFESAIKLKETKRSLIEI) enclose the UVR domain.

Belongs to the UvrC family. As to quaternary structure, interacts with UvrB in an incision complex.

It is found in the cytoplasm. The UvrABC repair system catalyzes the recognition and processing of DNA lesions. UvrC both incises the 5' and 3' sides of the lesion. The N-terminal half is responsible for the 3' incision and the C-terminal half is responsible for the 5' incision. This is UvrABC system protein C from Borrelia turicatae (strain 91E135).